Consider the following 404-residue polypeptide: Tryptophan synthase beta chain (404 aa).

K94 carries the N6-(pyridoxal phosphate)lysine modification.

Belongs to the TrpB family. As to quaternary structure, tetramer of two alpha and two beta chains. Pyridoxal 5'-phosphate is required as a cofactor.

The catalysed reaction is (1S,2R)-1-C-(indol-3-yl)glycerol 3-phosphate + L-serine = D-glyceraldehyde 3-phosphate + L-tryptophan + H2O. It functions in the pathway amino-acid biosynthesis; L-tryptophan biosynthesis; L-tryptophan from chorismate: step 5/5. The beta subunit is responsible for the synthesis of L-tryptophan from indole and L-serine. The chain is Tryptophan synthase beta chain from Staphylococcus aureus (strain bovine RF122 / ET3-1).